The sequence spans 870 residues: Dynamin-2 (870 aa).

One can recognise a Dynamin-type G domain in the interval 28–294 (HLDLPQIAVV…LTNHIRESLP (267 aa)). Residues 38 to 45 (GGQSAGKS) are G1 motif. Positions 41, 43, 44, 45, 46, 59, and 60 each coordinate GDP. The segment at 64-66 (VTR) is G2 motif. Positions 136–139 (DLPG) are G3 motif. The tract at residues 205–208 (TKLD) is G4 motif. GDP-binding residues include K206, D208, and D211. Position 231 is a phosphotyrosine; by SRC (Y231). The segment at 235-238 (VNRS) is G5 motif. N236, R237, and Q239 together coordinate GDP. Position 299 is an N6-acetyllysine (K299). In terms of domain architecture, PH spans 519-625 (LVIRRGWLTI…WKASFLRAGV (107 aa)). At Y597 the chain carries Phosphotyrosine; by SRC. K598 is modified (N6-acetyllysine). The region spanning 653–744 (VETIRNLVDS…IIGDISTSTV (92 aa)) is the GED domain. A disordered region spans residues 741–870 (TSTVSTPVPP…IRPAEPSLLD (130 aa)). Position 755 is a phosphothreonine (T755). Polar residues predominate over residues 756–767 (WLQSASSHSPTP). A Phosphoserine; by CDK1 modification is found at S764. Low complexity predominate over residues 796–806 (VPVGAAASFSA). A compositionally biased stretch (pro residues) spans 826 to 855 (PAPPQIPSRPVRIPPGIPPGVPSRRPPAAP). S848 carries the phosphoserine; by GSK3-alpha modification.

Belongs to the TRAFAC class dynamin-like GTPase superfamily. Dynamin/Fzo/YdjA family. As to quaternary structure, oligomerizes into a helical polymer that self-assembles around the vesicle membrane, when associated to the menbrane through lipid binding. Interacts with SHANK1 and SHANK2. Interacts with SNX9. Interacts (via C-terminal proline-rich domain (PRD)) with SNX18 (via SH3 domain); this interaction regulates ATG9A and ATG16L1 trafficking from recycling endosomes to sites of autophagosome formation. Interacts with SNX33 (via SH3 domain). Interacts with MYO1E (via SH3 domain). Interacts with PSTPIP1 (via SH3 domain). Interacts with CTNND2. Interacts (via C-terminal proline-rich domain (PRD)) with BIN1 (via SH3 domain); this interaction allows the recruitment of DNM2 to the membrane tubules and inhibits self-assembly-stimulated GTPase activity on the membrane. Interacts with GABARAP, GABARAPL1 and GABARAPL2. Interacts with MAP1LC3B (the lipidate and non-lipidated LC3 form); this interaction mediates recycling endosome scission leading to autophagosome release. Interacts with ITSN1. Interacts (via C-terminal proline-rich domain (PRD)) with SH3BP4 (via SH3 domain); this interaction controls the GTPase activity and is prevented by EGFR-induced tyrosine phosphorylation of either DNM2 or SH3BP4. May interact with PIK3C3. May be a component of a complex composed of RAB5A (in GDP-bound form), DYN2 and PIK3C3. Interacts with SDC4; this interaction is markedly enhanced at focal ahesion site upon induction of focal adhesions and stress-fiber formation. Interacts with ACTN1. Interacts with CTTN; this interaction stimulates the intrinsic GTPase activity of DNM2 and stabilizes the association of DNM2 and actin filaments; in addition this interaction is stimulated by ligand binding to the receptor, leading to the recruitment of the DNM2-CTTN complex to the sequestered receptor-ligand complex to its internalization. Interacts with NOSTRIN (via SH3 domain); this interaction allows the recruitment of NOS3 to dynamin-positive structures. Interacts with TUBG1; this interaction may participate in centrosome cohesion. Phosphorylation at Ser-848 by GSK3-alpha relieves the inhibition of BIN1 and promotes endocytosis. Phosphorylation at Ser-764 by CDK1 is greatly increased upon mitotic entry. It regulates cytokinesis downstream of calcineurin, and does not affect clathrin-mediated endocytosis. Dephosphorylated by calcineurin/PP2 during cytokinesis in a Ca(2+)- and calmodulin-dependent manner. Phosphorylated on tyrosine residues by EGFR and after activation of SRC. As to expression, widely expressed. Expressed in skeletal muscle and the peripheral nerve.

The protein localises to the cytoplasm. Its subcellular location is the cytoskeleton. It localises to the cytoplasmic vesicle. The protein resides in the clathrin-coated vesicle. It is found in the cell projection. The protein localises to the uropodium. Its subcellular location is the endosome. It localises to the microtubule organizing center. The protein resides in the centrosome. It is found in the centriole. The protein localises to the recycling endosome. Its subcellular location is the phagocytic cup. It localises to the phagosome membrane. The protein resides in the podosome. It is found in the cell junction. The protein localises to the postsynaptic density. Its subcellular location is the synapse. It localises to the synaptosome. The protein resides in the midbody. It is found in the membrane. The protein localises to the clathrin-coated pit. The enzyme catalyses GTP + H2O = GDP + phosphate + H(+). Catalyzes the hydrolysis of GTP and utilizes this energy to mediate vesicle scission at plasma membrane during endocytosis and filament remodeling at many actin structures during organization of the actin cytoskeleton. Plays an important role in vesicular trafficking processes, namely clathrin-mediated endocytosis (CME), exocytic and clathrin-coated vesicle from the trans-Golgi network, and PDGF stimulated macropinocytosis. During vesicular trafficking process, associates to the membrane, through lipid binding, and self-assembles into ring-like structure through oligomerization to form a helical polymer around the vesicle membrane and leading to vesicle scission. Plays a role in organization of the actin cytoskeleton by mediating arrangement of stress fibers and actin bundles in podocytes. During organization of the actin cytoskeleton, self-assembles into ring-like structure that directly bundles actin filaments to form typical membrane tubules decorated with dynamin spiral polymers. Self-assembly increases GTPase activity and the GTP hydrolysis causes the rapid depolymerization of dynamin spiral polymers, and results in dispersion of actin bundles. Remodels, through its interaction with CTTN, bundled actin filaments in a GTPase-dependent manner and plays a role in orchestrating the global actomyosin cytoskeleton. The interaction with CTTN stabilizes the interaction of DNM2 and actin filaments and stimulates the intrinsic GTPase activity that results in actin filament-barbed ends and increases the sensitivity of filaments in bundles to the actin depolymerizing factor, CFL1. Plays a role in the autophagy process, by participating in the formation of ATG9A vesicles destined for the autophagosomes through its interaction with SNX18, by mediating recycling endosome scission leading to autophagosome release through MAP1LC3B interaction. Also regulates maturation of apoptotic cell corpse-containing phagosomes by recruiting PIK3C3 to the phagosome membrane. Also plays a role in cytokinesis. May participate in centrosome cohesion through its interaction with TUBG1. Plays a role in the regulation of neuron morphology, axon growth and formation of neuronal growth cones. Involved in membrane tubulation. The polypeptide is Dynamin-2 (Homo sapiens (Human)).